A 335-amino-acid chain; its full sequence is Dolichyl-diphosphooligosaccharide--protein glycosyltransferase subunit MAGT1 (335 aa).

Positions 1–29 are cleaved as a signal peptide; it reads MASPRWLWCVCATAAVTLLLVSKVPSASA. The Extracellular segment spans residues 30-184; it reads QRKKEKVLVE…DVNIRVIRPP (155 aa). The Thioredoxin domain occupies 47 to 175; the sequence is WTNQRPVIRM…IARWIADRTD (129 aa). A glycan (N-linked (GlcNAc...) asparagine) is linked at Asn-71. Cys-87 and Cys-90 form a disulfide bridge. The helical transmembrane segment at 185-205 threads the bilayer; it reads NYAGPLMLGLLLAVIGGLVYL. Residues 206 to 209 lie on the Cytoplasmic side of the membrane; the sequence is RRSN. Residues 210–230 traverse the membrane as a helical segment; that stretch reads MEFLFNKTGWAFAALCFVLAM. Over 231–270 the chain is Extracellular; that stretch reads TSGQMWNHIRGPPYAHKNPHTGHVNYIHGSSQAQFVAETH. The chain crosses the membrane as a helical span at residues 271–291; sequence IVLLFNGGVTLGMVLLCEAAA. Topologically, residues 292 to 300 are cytoplasmic; sequence SDMDIGKRR. The helical transmembrane segment at 301–321 threads the bilayer; sequence MMCIAGIGLVVLFFSWMLSIF. The Extracellular portion of the chain corresponds to 322–335; sequence RSKYHGYPYSFLMS.

This sequence belongs to the OST3/OST6 family. In terms of assembly, accessory component of the STT3B-containing form of the oligosaccharyltransferase (OST) complex. OST exists in two different complex forms which contain common core subunits RPN1, RPN2, OST48, OST4, DAD1 and TMEM258, either STT3A or STT3B as catalytic subunits, and form-specific accessory subunits. OST can form stable complexes with the Sec61 complex or with both the Sec61 and TRAP complexes. The association of TUSC3 or MAGT1 with the STT3B-containing complex seems to be mutually exclusvice.

Its subcellular location is the cell membrane. The protein localises to the endoplasmic reticulum. It localises to the endoplasmic reticulum membrane. It functions in the pathway protein modification; protein glycosylation. Its function is as follows. Accessory component of the STT3B-containing form of the N-oligosaccharyl transferase (OST) complex which catalyzes the transfer of a high mannose oligosaccharide from a lipid-linked oligosaccharide donor to an asparagine residue within an Asn-X-Ser/Thr consensus motif in nascent polypeptide chains. Involved in N-glycosylation of STT3B-dependent substrates. Specifically required for the glycosylation of a subset of acceptor sites that are near cysteine residues; in this function seems to act redundantly with TUSC3. In its oxidized form proposed to form transient mixed disulfides with a glycoprotein substrate to facilitate access of STT3B to the unmodified acceptor site. Also has oxidoreductase-independent functions in the STT3B-containing OST complex possibly involving substrate recognition. Could indirectly play a role in Mg(2+) transport in epithelial cells. The protein is Dolichyl-diphosphooligosaccharide--protein glycosyltransferase subunit MAGT1 of Rattus norvegicus (Rat).